The sequence spans 392 residues: Heavy metal-associated isoprenylated plant protein 6 (392 aa).

Residues 1–19 (MGEKKEETATKPQGEKKPT) are compositionally biased toward basic and acidic residues. A disordered region spans residues 1-22 (MGEKKEETATKPQGEKKPTDGG). The HMA 1 domain occupies 23 to 86 (ITTVVMKLDM…KVADKIKRPV (64 aa)). 2 residues coordinate Cd(2+): Cys34 and Cys37. Positions 89–157 (VSTVAPPKKE…PPPPKESTVV (69 aa)) are disordered. Over residues 106–145 (AEKKPSPAAEEKPAEKKPAAVEKPGEKKEEKKKEEGEKKA) the composition is skewed to basic and acidic residues. One can recognise an HMA 2 domain in the interval 153–216 (ESTVVLKTKL…YLNEKLKRTV (64 aa)). Cys164 and Cys167 together coordinate Cd(2+). The segment covering 258–270 (KKVDGGGEKKKEV) has biased composition (basic and acidic residues). 2 disordered regions span residues 258-285 (KKVDGGGEKKKEVAVGGGGGGGGGGGDG) and 350-392 (GQGY…CSVM). Residues 272–285 (VGGGGGGGGGGGDG) show a composition bias toward gly residues. Cys389 carries the cysteine methyl ester modification. Cys389 is lipidated: S-farnesyl cysteine. Positions 390–392 (SVM) are cleaved as a propeptide — removed in mature form.

This sequence belongs to the HIPP family. Expressed in petioles, hypocotyls, peduncles, vascular bundles and root meristems.

It localises to the cell membrane. Its function is as follows. Heavy-metal-binding protein. Involved in the maintenance of heavy metal homeostasis and/or in detoxification. The protein is Heavy metal-associated isoprenylated plant protein 6 of Arabidopsis thaliana (Mouse-ear cress).